Consider the following 345-residue polypeptide: Anthranilate phosphoribosyltransferase (345 aa).

5-phospho-alpha-D-ribose 1-diphosphate is bound by residues glycine 79, 82 to 83 (GD), threonine 87, 89 to 92 (NVST), 106 to 114 (KHGNRAVSG), and serine 118. Anthranilate is bound at residue glycine 79. Serine 91 serves as a coordination point for Mg(2+). Residue asparagine 109 coordinates anthranilate. Arginine 164 is an anthranilate binding site. 2 residues coordinate Mg(2+): aspartate 223 and glutamate 224.

The protein belongs to the anthranilate phosphoribosyltransferase family. Homodimer. Mg(2+) serves as cofactor.

The enzyme catalyses N-(5-phospho-beta-D-ribosyl)anthranilate + diphosphate = 5-phospho-alpha-D-ribose 1-diphosphate + anthranilate. It participates in amino-acid biosynthesis; L-tryptophan biosynthesis; L-tryptophan from chorismate: step 2/5. Functionally, catalyzes the transfer of the phosphoribosyl group of 5-phosphorylribose-1-pyrophosphate (PRPP) to anthranilate to yield N-(5'-phosphoribosyl)-anthranilate (PRA). This chain is Anthranilate phosphoribosyltransferase, found in Sulfurisphaera tokodaii (strain DSM 16993 / JCM 10545 / NBRC 100140 / 7) (Sulfolobus tokodaii).